We begin with the raw amino-acid sequence, 402 residues long: Probable peptidoglycan glycosyltransferase FtsW (402 aa).

The Cytoplasmic segment spans residues methionine 1–glutamate 24. The chain crosses the membrane as a helical span at residues isoleucine 25–threonine 45. Over serine 46–serine 63 the chain is Periplasmic. Residues isoleucine 64–proline 84 form a helical membrane-spanning segment. Residues threonine 85 to asparagine 91 are Cytoplasmic-facing. The helical transmembrane segment at tyrosine 92–glycine 112 threads the bilayer. The Periplasmic portion of the chain corresponds to lysine 113–tryptophan 121. Residues isoleucine 122–phenylalanine 142 traverse the membrane as a helical segment. Over phenylalanine 143–glycine 160 the chain is Cytoplasmic. 2 helical membrane-spanning segments follow: residues isoleucine 161–phenylalanine 181 and glycine 182–valine 202. Arginine 203 is a topological domain (cytoplasmic). The chain crosses the membrane as a helical span at residues tryptophan 204–proline 224. Over tyrosine 225–serine 284 the chain is Periplasmic. Residues valine 285 to isoleucine 305 form a helical membrane-spanning segment. Residues valine 306–glutamine 324 are Cytoplasmic-facing. The chain crosses the membrane as a helical span at residues alanine 325–valine 345. At asparagine 346 to leucine 357 the chain is on the periplasmic side. The chain crosses the membrane as a helical span at residues proline 358–valine 378. Topologically, residues arginine 379 to lysine 402 are cytoplasmic.

This sequence belongs to the SEDS family. FtsW subfamily.

Its subcellular location is the cell inner membrane. The catalysed reaction is [GlcNAc-(1-&gt;4)-Mur2Ac(oyl-L-Ala-gamma-D-Glu-L-Lys-D-Ala-D-Ala)](n)-di-trans,octa-cis-undecaprenyl diphosphate + beta-D-GlcNAc-(1-&gt;4)-Mur2Ac(oyl-L-Ala-gamma-D-Glu-L-Lys-D-Ala-D-Ala)-di-trans,octa-cis-undecaprenyl diphosphate = [GlcNAc-(1-&gt;4)-Mur2Ac(oyl-L-Ala-gamma-D-Glu-L-Lys-D-Ala-D-Ala)](n+1)-di-trans,octa-cis-undecaprenyl diphosphate + di-trans,octa-cis-undecaprenyl diphosphate + H(+). The protein operates within cell wall biogenesis; peptidoglycan biosynthesis. Its function is as follows. Peptidoglycan polymerase that is essential for cell division. This Francisella salina protein is Probable peptidoglycan glycosyltransferase FtsW.